The chain runs to 278 residues: Hydroxyethylthiazole kinase (278 aa).

Methionine 49 serves as a coordination point for substrate. Residues asparagine 125 and serine 171 each contribute to the ATP site. Substrate is bound at residue glycine 198.

Belongs to the Thz kinase family. Requires Mg(2+) as cofactor.

It carries out the reaction 5-(2-hydroxyethyl)-4-methylthiazole + ATP = 4-methyl-5-(2-phosphooxyethyl)-thiazole + ADP + H(+). It participates in cofactor biosynthesis; thiamine diphosphate biosynthesis; 4-methyl-5-(2-phosphoethyl)-thiazole from 5-(2-hydroxyethyl)-4-methylthiazole: step 1/1. Catalyzes the phosphorylation of the hydroxyl group of 4-methyl-5-beta-hydroxyethylthiazole (THZ). The sequence is that of Hydroxyethylthiazole kinase from Natronomonas pharaonis (strain ATCC 35678 / DSM 2160 / CIP 103997 / JCM 8858 / NBRC 14720 / NCIMB 2260 / Gabara) (Halobacterium pharaonis).